We begin with the raw amino-acid sequence, 1495 residues long: Ras GTPase-activating-like protein IQG1 (1495 aa).

A Calponin-homology (CH) domain is found at 108–221; sequence LCRVSEVKIW…ILISMINKKW (114 aa). A Phosphothreonine modification is found at threonine 264. Position 268 is a phosphoserine (serine 268). Threonine 299 carries the phosphothreonine modification. IQ domains lie at 447 to 467, 538 to 567, 568 to 597, 599 to 628, 629 to 658, 687 to 716, and 717 to 746; these read EQDILRFQACLRGNKFRVLSS, SHYPLTKLQSYMRASYVRKKVMSLNTKLND, ERESIMKFSAIIRGNVVRCSEDAILSAVHD, HKENISKLQSLIRGIFTRSCLASIIYSLGK, ENCNIIQLSACIRGNAVRHKVQSLFAPENN, EYNNLALFQAFSRGALVRESLDQKSSFYKR, and NVRSVIMIQSWIRKSLQRSAYLELLDCPNP. Positions 759 to 798 form a coiled coil; that stretch reads NGTATIEEVQNQLESCQASLDSENMKKERLLKSIRQQLNI. The Ras-GAP domain maps to 876 to 1100; sequence SYFTRFVCEM…PHIKDVLYNV (225 aa).

In terms of assembly, interacts with AFR1. Interacts with AKR1. Interacts with activated CDC42. Interacts with calmodulin CMD1. Interacts with myosin MYO1 and its light chain MLC1. Interacts with BUD4. Interacts with INN1. Interacts with SEC3. Interacts with TEM1.

Its subcellular location is the bud neck. Required for the assembly and the contraction of the actomyosin ring at the bud neck during cytokinesis. Seems to be involved in additional tasks during cell division like axial bud-site selection and targeted secretion by recruiting the spatial landmark BUD4, the septin CDC12 and the secretion landmark SEC3 to the bud neck. May be regulated by calcium ions. This Saccharomyces cerevisiae (strain ATCC 204508 / S288c) (Baker's yeast) protein is Ras GTPase-activating-like protein IQG1 (IQG1).